We begin with the raw amino-acid sequence, 138 residues long: Large ribosomal subunit protein eL32 (138 aa).

The protein belongs to the eukaryotic ribosomal protein eL32 family.

The polypeptide is Large ribosomal subunit protein eL32 (Saccharolobus islandicus (strain Y.N.15.51 / Yellowstone #2) (Sulfolobus islandicus)).